Reading from the N-terminus, the 128-residue chain is Dehydrin Xero 1 (128 aa).

Positions 1 to 19 (MESYQNQSGAQQTHQQLDQ) are enriched in polar residues. The tract at residues 1–128 (MESYQNQSGA…IKEKLPGGHH (128 aa)) is disordered. Low complexity-rich tracts occupy residues 23–41 (PFPATTGAYGTAGGAPAVA) and 48–60 (GMLHRSGSSSSSS). A compositionally biased stretch (basic and acidic residues) spans 75-91 (GITEKIKEKLPGHHDSN). Residues 92 to 104 (KTSSLGSTTTAYD) show a composition bias toward polar residues. Residues 107–128 (TVHHEKKGMMEKIKEKLPGGHH) are compositionally biased toward basic and acidic residues.

The protein belongs to the plant dehydrin family.

The protein is Dehydrin Xero 1 (XERO1) of Arabidopsis thaliana (Mouse-ear cress).